The chain runs to 151 residues: Ribosomal RNA large subunit methyltransferase H (151 aa).

Residues Leu-73, Gly-100, and 119 to 124 (LSDLTM) contribute to the S-adenosyl-L-methionine site.

This sequence belongs to the RNA methyltransferase RlmH family. As to quaternary structure, homodimer.

Its subcellular location is the cytoplasm. The enzyme catalyses pseudouridine(1915) in 23S rRNA + S-adenosyl-L-methionine = N(3)-methylpseudouridine(1915) in 23S rRNA + S-adenosyl-L-homocysteine + H(+). Its function is as follows. Specifically methylates the pseudouridine at position 1915 (m3Psi1915) in 23S rRNA. This is Ribosomal RNA large subunit methyltransferase H from Aliarcobacter butzleri (strain RM4018) (Arcobacter butzleri).